Consider the following 555-residue polypeptide: GPI-anchor transamidase component PIGS (555 aa).

Topologically, residues 2-18 (AATGAAATDLEVVRGKR) are cytoplasmic. Residues arginine 15 and arginine 18 each coordinate a cardiolipin. The helical transmembrane segment at 19–39 (AALFFATVVIVLGLPLWWKTT) threads the bilayer. The Lumenal segment spans residues 40–517 (ETYRAPLPYS…LHLLYFPDDQ (478 aa)). 2 N-linked (GlcNAc...) asparagine glycosylation sites follow: asparagine 267 and asparagine 370. Residues 518-532 (KFAIYIPLFLPMAVP) form a helical membrane-spanning segment. At 533–555 (ILLSLFKIFLETRKSWKKPEKTD) the chain is on the cytoplasmic side.

The protein belongs to the PIGS family. As to quaternary structure, heteropentamer. Part of the GPI-anchor transamidase complex, consisting of PIGK, PIGT, PIGS, PIGU and GAA1.

Its subcellular location is the endoplasmic reticulum membrane. The protein operates within glycolipid biosynthesis; glycosylphosphatidylinositol-anchor biosynthesis. Its function is as follows. Component of the glycosylphosphatidylinositol-anchor (GPI-anchor) transamidase (GPI-T) complex that catalyzes the formation of the linkage between a proprotein and a GPI-anchor and participates in GPI anchored protein biosynthesis. In Bos taurus (Bovine), this protein is GPI-anchor transamidase component PIGS.